The following is a 440-amino-acid chain: Xylose isomerase (440 aa).

Catalysis depends on residues His-101 and Asp-104. 7 residues coordinate Mg(2+): Glu-232, Glu-268, His-271, Asp-296, Asp-307, Asp-309, and Asp-339.

The protein belongs to the xylose isomerase family. As to quaternary structure, homotetramer. It depends on Mg(2+) as a cofactor.

The protein resides in the cytoplasm. The enzyme catalyses alpha-D-xylose = alpha-D-xylulofuranose. The polypeptide is Xylose isomerase (Escherichia coli O17:K52:H18 (strain UMN026 / ExPEC)).